Reading from the N-terminus, the 64-residue chain is Large ribosomal subunit protein uL29 (64 aa).

Belongs to the universal ribosomal protein uL29 family.

The sequence is that of Large ribosomal subunit protein uL29 from Legionella pneumophila (strain Lens).